Consider the following 130-residue polypeptide: Small ribosomal subunit protein uS8 (130 aa).

This sequence belongs to the universal ribosomal protein uS8 family. As to quaternary structure, part of the 30S ribosomal subunit. Contacts proteins S5 and S12.

In terms of biological role, one of the primary rRNA binding proteins, it binds directly to 16S rRNA central domain where it helps coordinate assembly of the platform of the 30S subunit. In Sodalis glossinidius (strain morsitans), this protein is Small ribosomal subunit protein uS8.